A 901-amino-acid polypeptide reads, in one-letter code: Protein translocase subunit SecA (901 aa).

Residues glutamine 85, glycine 103–threonine 107, and aspartate 510 each bind ATP. The tract at residues arginine 848–glutamine 901 is disordered. Residues isoleucine 849–serine 866 show a composition bias toward polar residues. The Zn(2+) site is built by cysteine 882, cysteine 884, cysteine 893, and histidine 894. Basic residues predominate over residues lysine 888–glutamine 901.

It belongs to the SecA family. Monomer and homodimer. Part of the essential Sec protein translocation apparatus which comprises SecA, SecYEG and auxiliary proteins SecDF-YajC and YidC. Zn(2+) serves as cofactor.

The protein resides in the cell inner membrane. It localises to the cytoplasm. The enzyme catalyses ATP + H2O + cellular proteinSide 1 = ADP + phosphate + cellular proteinSide 2.. In terms of biological role, part of the Sec protein translocase complex. Interacts with the SecYEG preprotein conducting channel. Has a central role in coupling the hydrolysis of ATP to the transfer of proteins into and across the cell membrane, serving both as a receptor for the preprotein-SecB complex and as an ATP-driven molecular motor driving the stepwise translocation of polypeptide chains across the membrane. This is Protein translocase subunit SecA from Haemophilus influenzae (strain 86-028NP).